The primary structure comprises 97 residues: ATP-dependent Clp protease adapter protein ClpS (97 aa).

This sequence belongs to the ClpS family. As to quaternary structure, binds to the N-terminal domain of the chaperone ClpA.

Involved in the modulation of the specificity of the ClpAP-mediated ATP-dependent protein degradation. The chain is ATP-dependent Clp protease adapter protein ClpS from Nautilia profundicola (strain ATCC BAA-1463 / DSM 18972 / AmH).